The primary structure comprises 98 residues: NADH-ubiquinone oxidoreductase chain 4L (98 aa).

The next 3 helical transmembrane spans lie at 1–21 (MSMVYANIFLAFIMSLMGLLM), 29–49 (SLLCLEGMMLSLFVMMTVTIL), and 61–81 (IILLVFAACEAALGLSLLVMV).

Belongs to the complex I subunit 4L family. In terms of assembly, core subunit of respiratory chain NADH dehydrogenase (Complex I) which is composed of 45 different subunits.

It is found in the mitochondrion inner membrane. It catalyses the reaction a ubiquinone + NADH + 5 H(+)(in) = a ubiquinol + NAD(+) + 4 H(+)(out). Core subunit of the mitochondrial membrane respiratory chain NADH dehydrogenase (Complex I) which catalyzes electron transfer from NADH through the respiratory chain, using ubiquinone as an electron acceptor. Part of the enzyme membrane arm which is embedded in the lipid bilayer and involved in proton translocation. This is NADH-ubiquinone oxidoreductase chain 4L (MT-ND4L) from Erignathus barbatus (Bearded seal).